Here is a 226-residue protein sequence, read N- to C-terminus: Triosephosphate isomerase (226 aa).

H91 (electrophile) is an active-site residue. Catalysis depends on E163, which acts as the Proton acceptor. Residues G169 and S207 each coordinate substrate.

It belongs to the triosephosphate isomerase family. As to quaternary structure, homodimer.

The protein resides in the cytoplasm. It carries out the reaction D-glyceraldehyde 3-phosphate = dihydroxyacetone phosphate. It functions in the pathway carbohydrate biosynthesis; gluconeogenesis. The protein operates within carbohydrate degradation; glycolysis; D-glyceraldehyde 3-phosphate from glycerone phosphate: step 1/1. In terms of biological role, involved in the gluconeogenesis. Catalyzes stereospecifically the conversion of dihydroxyacetone phosphate (DHAP) to D-glyceraldehyde-3-phosphate (G3P). In Rhizobium etli (strain ATCC 51251 / DSM 11541 / JCM 21823 / NBRC 15573 / CFN 42), this protein is Triosephosphate isomerase.